The sequence spans 504 residues: Pentatricopeptide repeat-containing protein At5g16640, mitochondrial (504 aa).

The N-terminal 43 residues, 1 to 43 (MRRSISSKAKSFLHRNLLYSGNSGTSPSSSFSICGFCFSRRAY), are a transit peptide targeting the mitochondrion. PPR repeat units lie at residues 45–79 (NGSD…RPLP), 80–114 (SIAD…GIPH), 115–149 (NLCT…GHEP), 150–184 (SIVT…GYKP), 185–219 (NVVI…GIGP), 220–254 (DVVT…EIYP), 255–289 (DVFT…SLDP), 290–324 (DIVT…GCFP), 325–359 (DVVT…GVVR), 360–394 (NTVT…GVHP), 395–429 (NIIT…GMDA), 430–464 (DIVT…GLMP), and 465–499 (DIWT…GILP).

The protein belongs to the PPR family. P subfamily.

It is found in the mitochondrion. This chain is Pentatricopeptide repeat-containing protein At5g16640, mitochondrial, found in Arabidopsis thaliana (Mouse-ear cress).